A 196-amino-acid chain; its full sequence is Probable GTP-binding protein EngB (196 aa).

The EngB-type G domain maps to 22–195; the sequence is NIPEIALVGR…WQWIEERMGK (174 aa). GTP is bound by residues 30–37, 57–61, 75–78, 142–145, and 174–176; these read GRSNVGKS, GKTQT, DVPG, TKID, and FSA. Mg(2+)-binding residues include Ser-37 and Thr-59.

This sequence belongs to the TRAFAC class TrmE-Era-EngA-EngB-Septin-like GTPase superfamily. EngB GTPase family. Mg(2+) serves as cofactor.

In terms of biological role, necessary for normal cell division and for the maintenance of normal septation. The sequence is that of Probable GTP-binding protein EngB from Limosilactobacillus reuteri (strain DSM 20016) (Lactobacillus reuteri).